The chain runs to 146 residues: Phospholipase A2, membrane associated (146 aa).

Positions 1–21 (MKVLLLLAASIMAFGSIQVQG) are cleaved as a signal peptide. 7 disulfides stabilise this stretch: Cys47–Cys139, Cys49–Cys65, Cys64–Cys119, Cys70–Cys146, Cys71–Cys112, Cys80–Cys105, and Cys98–Cys110. Ca(2+) contacts are provided by His48, Gly50, and Gly52. Residue His68 is part of the active site. Asp69 lines the Ca(2+) pocket. Asp113 is a catalytic residue.

This sequence belongs to the phospholipase A2 family. Requires Ca(2+) as cofactor. Mainly in the Paneth cells adjacent to the stem population in the small intestines.

The protein localises to the secreted. Its subcellular location is the cell membrane. The protein resides in the mitochondrion outer membrane. It carries out the reaction a 1,2-diacyl-sn-glycero-3-phosphoethanolamine + H2O = a 1-acyl-sn-glycero-3-phosphoethanolamine + a fatty acid + H(+). It catalyses the reaction 1-hexadecanoyl-2-(9Z-octadecenoyl)-sn-glycero-3-phosphoethanolamine + H2O = 1-hexadecanoyl-sn-glycero-3-phosphoethanolamine + (9Z)-octadecenoate + H(+). The enzyme catalyses 1-hexadecanoyl-2-(9Z,12Z-octadecadienoyl)-sn-glycero-3-phosphoethanolamine + H2O = 1-hexadecanoyl-sn-glycero-3-phosphoethanolamine + (9Z,12Z)-octadecadienoate + H(+). The catalysed reaction is 1-hexadecanoyl-2-(5Z,8Z,11Z,14Z-eicosatetraenoyl)-sn-glycero-3-phosphoethanolamine + H2O = 1-hexadecanoyl-sn-glycero-3-phosphoethanolamine + (5Z,8Z,11Z,14Z)-eicosatetraenoate + H(+). It carries out the reaction N-hexadecanoyl-1,2-di-(9Z-octadecenoyl)-sn-glycero-3-phosphoethanolamine + H2O = N-hexadecanoyl-1-(9Z-octadecenoyl)-sn-glycero-3-phosphoethanolamine + (9Z)-octadecenoate + H(+). It catalyses the reaction 1,2-dihexadecanoyl-sn-glycero-3-phospho-(1'-sn-glycerol) + H2O = 1-hexadecanoyl-sn-glycero-3-phospho-(1'-sn-glycerol) + hexadecanoate + H(+). The enzyme catalyses 1-hexadecanoyl-2-(9Z-octadecenoyl)-sn-glycero-3-phosphoglycerol + H2O = 1-hexadecanoyl-sn-glycero-3-phosphoglycerol + (9Z)-octadecenoate + H(+). The catalysed reaction is 1-hexadecanoyl-2-(9Z-octadecenoyl)-sn-glycero-3-phospho-(1'-sn-glycerol) + H2O = 1-hexadecanoyl-sn-glycero-3-phospho-(1'-sn-glycerol) + (9Z)-octadecenoate + H(+). It carries out the reaction a 1,2-diacyl-sn-glycero-3-phosphocholine + H2O = a 1-acyl-sn-glycero-3-phosphocholine + a fatty acid + H(+). It catalyses the reaction 1,2-dihexadecanoyl-sn-glycero-3-phosphocholine + H2O = 1-hexadecanoyl-sn-glycero-3-phosphocholine + hexadecanoate + H(+). The enzyme catalyses 1-hexadecanoyl-2-(9Z-octadecenoyl)-sn-glycero-3-phosphocholine + H2O = 1-hexadecanoyl-sn-glycero-3-phosphocholine + (9Z)-octadecenoate + H(+). The catalysed reaction is 1-hexadecanoyl-2-(9Z,12Z-octadecadienoyl)-sn-glycero-3-phosphocholine + H2O = (9Z,12Z)-octadecadienoate + 1-hexadecanoyl-sn-glycero-3-phosphocholine + H(+). It carries out the reaction 1-hexadecanoyl-2-(4Z,7Z,10Z,13Z,16Z,19Z-docosahexaenoyl)-sn-glycero-3-phosphocholine + H2O = (4Z,7Z,10Z,13Z,16Z,19Z)-docosahexaenoate + 1-hexadecanoyl-sn-glycero-3-phosphocholine + H(+). Secretory calcium-dependent phospholipase A2 that primarily targets extracellular phospholipids with implications in host antimicrobial defense, inflammatory response and tissue regeneration. Hydrolyzes the ester bond of the fatty acyl group attached at sn-2 position of phospholipids (phospholipase A2 activity) with preference for phosphatidylethanolamines and phosphatidylglycerols over phosphatidylcholines. Contributes to lipid remodeling of cellular membranes and generation of lipid mediators involved in pathogen clearance. Displays bactericidal activity against Gram-positive bacteria by directly hydrolyzing phospholipids of the bacterial membrane. Upon sterile inflammation, targets membrane phospholipids of extracellular mitochondria released from activated platelets, generating free unsaturated fatty acids such as arachidonate that is used by neighboring leukocytes to synthesize inflammatory eicosanoids such as leukotrienes. Simultaneously, by compromising mitochondrial membrane integrity, promotes the release in circulation of potent damage-associated molecular pattern molecules that activate the innate immune response. Plays a stem cell regulator role in the intestinal crypt. Within intracellular compartment mediates Paneth cell differentiation and its stem cell supporting functions by inhibiting Wnt signaling pathway in intestinal stem cell (ICS). Secreted in the intestinal lumen upon inflammation, acts in an autocrine way and promotes prostaglandin E2 synthesis that stimulates Wnt signaling pathway in ICS cells and tissue regeneration. May play a role in the biosynthesis of N-acyl ethanolamines that regulate energy metabolism and inflammation. Hydrolyzes N-acyl phosphatidylethanolamines to N-acyl lysophosphatidylethanolamines, which are further cleaved by a lysophospholipase D to release N-acyl ethanolamines. Independent of its catalytic activity, acts as a ligand for integrins. Binds to and activates integrins ITGAV:ITGB3, ITGA4:ITGB1 and ITGA5:ITGB1. Binds to a site (site 2) which is distinct from the classical ligand-binding site (site 1) and induces integrin conformational changes and enhanced ligand binding to site 1. Induces cell proliferation in an integrin-dependent manner. The protein is Phospholipase A2, membrane associated (Pla2g2a) of Mus musculus (Mouse).